The primary structure comprises 649 residues: Echinoderm microtubule-associated protein-like 2 (649 aa).

Residues 10–649 form a tandem atypical propeller in EMLs region; that stretch reads KEVIFSVEDG…DTSVLQWRVV (640 aa). Coiled-coil stretches lie at residues 13-58 and 73-114; these read IFSV…LKLE and YLLP…LAIH. WD repeat units follow at residues 56–93, 97–144, 151–192, 195–234, 241–280, 285–323, 369–406, 410–447, 452–489, 495–535, 564–602, and 609–648; these read KLEW…LYSV, RQRH…IWDS, HVLG…VWDW, ETKV…FWTL, KRQG…VWGK, ITQA…LWGS, FSLL…LWSS, QPLW…LLDT, LVAI…VYTV, KVSR…YWDP, FGIW…LFSY, and ALSH…QWRV.

It belongs to the WD repeat EMAP family. Homotrimer; self-association is mediated by the N-terminal coiled coil. As to quaternary structure, interacts with GRID2 and may also interact with GRID1. Interacts with EML3. Binds unpolymerized tubulins via its WD repeat region. As to expression, ubiquitous.

The protein resides in the cytoplasm. It localises to the cytoskeleton. It is found in the spindle. Functionally, tubulin binding protein that inhibits microtubule nucleation and growth, resulting in shorter microtubules. The chain is Echinoderm microtubule-associated protein-like 2 (EML2) from Homo sapiens (Human).